The sequence spans 814 residues: MKVRKYITLCFWWAFSTSALVSSQQIPLKDHTSRQYFAVESNETLSRLEEMHPNWKYEHDVRGLPNHYVFSKELLKLGKRSSLEELQGDNNDHILSVHDLFPRNDLFKRLPVPAPPMDSSLLPVKEAEDKLSINDPLFERQWHLVNPSFPGSDINVLDLWYNNITGAGVVAAIVDDGLDYENEDLKDNFCAEGSWDFNDNTNLPKPRLSDDYHGTRCAGEIAAKKGNNFCGVGVGYNAKISGIRILSGDITTEDEAASLIYGLDVNDIYSCSWGPADDGRHLQGPSDLVKKALVKGVTEGRDSKGAIYVFASGNGGTRGDNCNYDGYTNSIYSITIGAIDHKDLHPPYSEGCSAVMAVTYSSGSGEYIHSSDINGRCSNSHGGTSAAAPLAAGVYTLLLEANPNLTWRDVQYLSILSAVGLEKNADGDWRDSAMGKKYSHRYGFGKIDAHKLIEMSKTWENVNAQTWFYLPTLYVSQSTNSTEETLESVITISEKSLQDANFKRIEHVTVTVDIDTEIRGTTTVDLISPAGIISNLGVVRPRDVSSEGFKDWTFMSVAHWGENGVGDWKIKVKTTENGHRIDFHSWRLKLFGESIDSSKTETFVFGNDKEEVEPAATESTVSQYSASSTSISISATSTSSISIGVETSAIPQTTTASTDPDSDPNTPKKLSSPRQAMHYFLTIFLIGATFLVLYFMFFMKSRRRIRRSRAETYEFDIIDTDSEYDSTLDNGTSGITEPEEVEDFDFDLSDEDHLASLSSSENGDAEHTIDSVLTNENPFSDPIKQKFPNDANAESASNKLQELQPDVPPSSGRS.

The signal sequence occupies residues 1–19; that stretch reads MKVRKYITLCFWWAFSTSA. Positions 20–109 are excised as a propeptide; sequence LVSSQQIPLK…LFPRNDLFKR (90 aa). The N-linked (GlcNAc...) asparagine glycan is linked to Asn42. A propeptide spans 110-113 (removed by dipeptidylpeptidase STE13); it reads LPVP. Residues 114 to 678 are Lumenal-facing; sequence APPMDSSLLP…KLSSPRQAMH (565 aa). Asp135 provides a ligand contact to Ca(2+). The region spanning 141–453 is the Peptidase S8 domain; sequence QWHLVNPSFP…FGKIDAHKLI (313 aa). Asn163 carries N-linked (GlcNAc...) asparagine glycosylation. The active-site Charge relay system is the Asp175. Residue Asp184 participates in Ca(2+) binding. His213 serves as the catalytic Charge relay system. Residues Asn227, Asp277, Asp320, and Glu350 each coordinate Ca(2+). Intrachain disulfides connect Cys230–Cys377 and Cys322–Cys352. Catalysis depends on Ser385, which acts as the Charge relay system. Residues Asn404 and Asn480 are each glycosylated (N-linked (GlcNAc...) asparagine). A P/Homo B domain is found at 462–596; that stretch reads VNAQTWFYLP…RLKLFGESID (135 aa). The segment at 651 to 671 is disordered; the sequence is PQTTTASTDPDSDPNTPKKLS. The span at 653–667 shows a compositional bias: low complexity; sequence TTTASTDPDSDPNTP. Residues 679 to 699 traverse the membrane as a helical segment; that stretch reads YFLTIFLIGATFLVLYFMFFM. At 700-814 the chain is on the cytoplasmic side; the sequence is KSRRRIRRSR…PDVPPSSGRS (115 aa). Residues 756-814 are disordered; sequence SLSSSENGDAEHTIDSVLTNENPFSDPIKQKFPNDANAESASNKLQELQPDVPPSSGRS. Polar residues predominate over residues 792 to 801; that stretch reads NAESASNKLQ.

It belongs to the peptidase S8 family. Furin subfamily. Ca(2+) is required as a cofactor. Post-translationally, O-glycosylated.

It is found in the golgi apparatus. It localises to the trans-Golgi network membrane. The enzyme catalyses Cleavage of -Lys-Arg-|-Xaa- and -Arg-Arg-|-Xaa- bonds to process yeast alpha-factor pheromone and killer toxin precursors.. Functionally, processing of precursors of alpha-factors and killer toxin. The chain is Kexin (KEX2) from Saccharomyces cerevisiae (strain ATCC 204508 / S288c) (Baker's yeast).